The primary structure comprises 964 residues: Siderophore exporter MmpL5 (964 aa).

12 helical membrane passes run Phe-31–Pro-51, Ser-203–Tyr-223, Ala-230–Leu-250, Ile-255–Thr-275, Met-302–Phe-322, Ala-340–Val-360, Trp-389–Pro-409, Thr-773–Ile-793, Val-803–Trp-823, Ile-826–Val-846, Val-880–Leu-900, and Ser-923–Val-943.

This sequence belongs to the resistance-nodulation-cell division (RND) (TC 2.A.6) family. MmpL subfamily. As to quaternary structure, interacts with MmpS5.

It localises to the cell inner membrane. In terms of biological role, part of an export system, which is required for biosynthesis and secretion of siderophores. This is Siderophore exporter MmpL5 (mmpL5) from Mycobacterium tuberculosis (strain CDC 1551 / Oshkosh).